A 537-amino-acid polypeptide reads, in one-letter code: MTSSKSHPEAADIQRVRRALLSVSDKTGLIDFARALHGAGVELISTGGTAKAIKDAALPVKDVADLTGFPEMMDGRVKTLHPKVHGGLLAVRDDAEHAAAMKEHGIAGIDLLCVNLYPFEATVAKGAAYDECVENIDIGGPAMIRAAAKNHAYVGVIVDGADYAAVIEEITGKGGTSLVLRKRLAQKAYARTAAYDAAISNWFANAIGETAPDYRAFGGSLKQTLRYGENPHQVASFYVTGENRPGVSNAEQLQGKELSYNNINDTDAAFELVGEFDPKLAPAIAIIKHANPCGVATGATLADAYRKALACDPVSAFGGIIAANRPLDGETAEEIARIFTEVIIAPEADEDARRIIGAKKNLRLLITHGLPDPATAGLFYKSVAGGLLVQSRDNGRVDTLDLKVVTKRAPTAQEMEDLKFAFRVCKHVKSNAIIYVKNGATVGIGAGQMSRVDSARIAARKAQDAAEAAGEKTPATIGSVVASDAFFPFADGLLSAAEAGATAVIQPGGSVRDDEVIAAADEKGLAMVMTGMRHFRH.

The MGS-like domain maps to 11–158 (ADIQRVRRAL…KNHAYVGVIV (148 aa)).

It belongs to the PurH family.

It catalyses the reaction (6R)-10-formyltetrahydrofolate + 5-amino-1-(5-phospho-beta-D-ribosyl)imidazole-4-carboxamide = 5-formamido-1-(5-phospho-D-ribosyl)imidazole-4-carboxamide + (6S)-5,6,7,8-tetrahydrofolate. It carries out the reaction IMP + H2O = 5-formamido-1-(5-phospho-D-ribosyl)imidazole-4-carboxamide. It functions in the pathway purine metabolism; IMP biosynthesis via de novo pathway; 5-formamido-1-(5-phospho-D-ribosyl)imidazole-4-carboxamide from 5-amino-1-(5-phospho-D-ribosyl)imidazole-4-carboxamide (10-formyl THF route): step 1/1. Its pathway is purine metabolism; IMP biosynthesis via de novo pathway; IMP from 5-formamido-1-(5-phospho-D-ribosyl)imidazole-4-carboxamide: step 1/1. In Parvibaculum lavamentivorans (strain DS-1 / DSM 13023 / NCIMB 13966), this protein is Bifunctional purine biosynthesis protein PurH.